The chain runs to 394 residues: Flap endonuclease 1 (394 aa).

Residues 1 to 104 (MGIKQLFSVI…GELAKRFQRK (104 aa)) are N-domain. Residue aspartate 34 participates in Mg(2+) binding. DNA contacts are provided by arginine 47 and arginine 70. Positions 86, 158, 160, 179, and 181 each coordinate Mg(2+). The segment at 122 to 253 (DVEKFSRRTV…STALKLIREH (132 aa)) is I-domain. Glutamate 158 serves as a coordination point for DNA. DNA is bound by residues glycine 231 and aspartate 233. Mg(2+) is bound at residue aspartate 233. The segment at 341–349 (QQARIEGFF) is interaction with PCNA. A compositionally biased stretch (basic and acidic residues) spans 356–383 (EEEKKAHKRKLEEQAEQKRKKVKEEKKE). The disordered stretch occupies residues 356 to 394 (EEEKKAHKRKLEEQAEQKRKKVKEEKKEKAKLKAKPRGA). Positions 384–394 (KAKLKAKPRGA) are enriched in basic residues.

Belongs to the XPG/RAD2 endonuclease family. FEN1 subfamily. Interacts with PCNA. Three molecules of dnr-8/fen1 bind to one PCNA trimer with each molecule binding to one PCNA monomer. PCNA stimulates the nuclease activity without altering cleavage specificity. Mg(2+) serves as cofactor. Phosphorylated. Phosphorylation upon DNA damage induces relocalization to the nuclear plasma.

The protein localises to the nucleus. It localises to the nucleolus. Its subcellular location is the nucleoplasm. It is found in the mitochondrion. Its function is as follows. Structure-specific nuclease with 5'-flap endonuclease and 5'-3' exonuclease activities involved in DNA replication and repair. During DNA replication, cleaves the 5'-overhanging flap structure that is generated by displacement synthesis when DNA polymerase encounters the 5'-end of a downstream Okazaki fragment. It enters the flap from the 5'-end and then tracks to cleave the flap base, leaving a nick for ligation. Also involved in the long patch base excision repair (LP-BER) pathway, by cleaving within the apurinic/apyrimidinic (AP) site-terminated flap. Acts as a genome stabilization factor that prevents flaps from equilibrating into structures that lead to duplications and deletions. Also possesses 5'-3' exonuclease activity on nicked or gapped double-stranded DNA, and exhibits RNase H activity. Also involved in replication and repair of rDNA and in repairing mitochondrial DNA. The chain is Flap endonuclease 1 (dnr-8) from Neurospora crassa (strain ATCC 24698 / 74-OR23-1A / CBS 708.71 / DSM 1257 / FGSC 987).